The primary structure comprises 964 residues: Chromatin assembly factor 1 subunit A (964 aa).

A binds to PCNA region spans residues 1-49 (MLEEPECGAPGARGEAAAMDCKDRPAFPVKKLIQARLPFKRLNLVPKEK). Positions 1 to 316 (MLEEPECGAP…LHTGPSPFPA (316 aa)) are binds to CBX1 chromo shadow domain. A phosphoserine mark is found at Ser126, Ser141, and Ser144. Residues 146 to 232 (AQKNINGVPD…KDRDGWSEAG (87 aa)) are disordered. Over residues 156-172 (KAGDDRGLPKARQKDEL) the composition is skewed to basic and acidic residues. Lys185 is covalently cross-linked (Glycyl lysine isopeptide (Lys-Gly) (interchain with G-Cter in SUMO1); alternate). Lys185 is covalently cross-linked (Glycyl lysine isopeptide (Lys-Gly) (interchain with G-Cter in SUMO2); alternate). The PxVxL motif signature appears at 236–249 (FKGKMPVVVLQDIL). Disordered stretches follow at residues 253-437 (PPAR…REEE) and 601-641 (DSDE…VPHG). Residues 284-298 (LSHSSLSSSSPTSSP) show a composition bias toward low complexity. At Ser312 the chain carries Phosphoserine. A coiled-coil region spans residues 329–453 (RGSAEKNKMK…KAEITRFFQK (125 aa)). A compositionally biased stretch (basic and acidic residues) spans 331–437 (SAEKNKMKLQ…EEEKRLREEE (107 aa)). Composition is skewed to acidic residues over residues 601-612 (DSDEEWEEEEPG) and 620-635 (GDDD…EDDG). Residues 644 to 680 (SEDEGVTEECADPENHKVRQKLKAKEWDEFLAKGKRF) are necessary for homodimerization and competence for chromatin assembly. The segment at 662–964 (RQKLKAKEWD…FVSPSSLRLS (303 aa)) is binds to p60. Thr723 carries the post-translational modification Phosphothreonine. The segment at 769-799 (RDAGSPEDSAASPPSPGPARPQTPTASEDVA) is disordered. The span at 770–780 (DAGSPEDSAAS) shows a compositional bias: low complexity. Residues Ser773, Ser783, Ser811, Ser876, and Ser881 each carry the phosphoserine modification. The segment at 859–878 (EDSGSVPAPGPGQGMPVSLK) is disordered. Disordered stretches follow at residues 897–920 (DGQV…DDEG) and 933–964 (IQAP…LRLS). A compositionally biased stretch (acidic residues) spans 904-920 (DLDDFQADTEEEDDDEG). The span at 949–964 (MDTSESFVSPSSLRLS) shows a compositional bias: polar residues. Position 959 is a phosphoserine (Ser959).

It belongs to the CHAF1A family. As to quaternary structure, homodimer. Part of the CAF-1 complex that contains RBBP4, CHAF1B and CHAF1A. CHAF1A binds directly to CHAF1B. Only minor amounts of RBBP4 are complexed with CHAF1A and CHAF1B in G1 phase. Interacts with PCNA; the interaction is direct. Interacts (via the PxVxL motif) with CBX5; the interaction is direct. Interacts with MBD1. Interacts with histones H3.1, H3.2 and H3.1t.

Its subcellular location is the nucleus. Functionally, acts as a component of the histone chaperone complex chromatin assembly factor 1 (CAF-1), which assembles histone octamers onto DNA during replication and repair. CAF-1 performs the first step of the nucleosome assembly process, bringing newly synthesized histones H3 and H4 to replicating DNA; histones H2A/H2B can bind to this chromatin precursor subsequent to DNA replication to complete the histone octamer. It may play a role in heterochromatin maintenance in proliferating cells by bringing newly synthesized cbx proteins to heterochromatic DNA replication foci. The chain is Chromatin assembly factor 1 subunit A (CHAF1A) from Bos taurus (Bovine).